Reading from the N-terminus, the 220-residue chain is MQDDRIIRETGAAARVAAIVMPVLDALGYRLVRVRLSAQDGLTLQIMAERPDGTMTVDDCEEVSRAVSPALDVEDPIDSAYQLEISSPGIDRPLVRLSDFQAALGHLAKVETSVMVDGRKRFRGQIVGCTGETLTIERDKVAEGEAPLAEIPLDAISDAKLVLTDALIREALKKDKEERRQRKKARRRGEKGGVGDDGTAGEEQPDSAREGPARSASEGE.

The disordered stretch occupies residues 173 to 220 (KKDKEERRQRKKARRRGEKGGVGDDGTAGEEQPDSAREGPARSASEGE).

This sequence belongs to the RimP family.

It localises to the cytoplasm. Functionally, required for maturation of 30S ribosomal subunits. In Chelativorans sp. (strain BNC1), this protein is Ribosome maturation factor RimP.